We begin with the raw amino-acid sequence, 160 residues long: Ribosomal RNA large subunit methyltransferase H (160 aa).

S-adenosyl-L-methionine is bound by residues Leu76, Gly108, and 127 to 132; that span reads LGKMTW.

Belongs to the RNA methyltransferase RlmH family. In terms of assembly, homodimer.

It is found in the cytoplasm. It catalyses the reaction pseudouridine(1915) in 23S rRNA + S-adenosyl-L-methionine = N(3)-methylpseudouridine(1915) in 23S rRNA + S-adenosyl-L-homocysteine + H(+). Its function is as follows. Specifically methylates the pseudouridine at position 1915 (m3Psi1915) in 23S rRNA. The chain is Ribosomal RNA large subunit methyltransferase H from Sinorhizobium fredii (strain NBRC 101917 / NGR234).